Here is a 243-residue protein sequence, read N- to C-terminus: Adenylate dimethylallyltransferase (243 aa).

The catalysed reaction is dimethylallyl diphosphate + AMP = N(6)-(dimethylallyl)adenosine 5'-phosphate + diphosphate. Transfers dimethylallyl groups to AMP as part of the biosynthesis of cytokinin phytohormones. This is Adenylate dimethylallyltransferase (tzs) from Agrobacterium tumefaciens (strain T37).